Here is a 359-residue protein sequence, read N- to C-terminus: Palmitoyltransferase ERF2 (359 aa).

The segment at 1-21 (MALVSRRSTRSESTSITKEEH) is disordered. The Cytoplasmic segment spans residues 1–75 (MALVSRRSTR…RFRTVKGAKP (75 aa)). A helical membrane pass occupies residues 76–96 (LWLGVLLAIVCPMVLFSIFEA). The Lumenal segment spans residues 97–104 (HKLWHTQN). Residues 105–125 (GYKVLVIFFYYFWVITLASFI) form a helical membrane-spanning segment. At 126 to 217 (RTATSDPGVL…NCIGKRNYRF (92 aa)) the chain is on the cytoplasmic side. In terms of domain architecture, DHHC spans 173-223 (KYCPSCRIWRPPRSSHCSTCNVCVMVHDHHCIWVNNCIGKRNYRFFLIFLL). Cys203 acts as the S-palmitoyl cysteine intermediate in catalysis. The chain crosses the membrane as a helical span at residues 218–238 (FLIFLLGAILSSVILLTNCAI). At 239–250 (HIARESGGPRDC) the chain is on the lumenal side. The chain crosses the membrane as a helical span at residues 251-271 (PVAILLLCYAGLTLWYPAILF). The Cytoplasmic portion of the chain corresponds to 272 to 359 (TYHIFMAGNQ…AHSFEKIQKI (88 aa)).

Belongs to the DHHC palmitoyltransferase family. ERF2/ZDHHC9 subfamily. Interacts with SHR5. In terms of processing, autopalmitoylated.

Its subcellular location is the endoplasmic reticulum membrane. It catalyses the reaction L-cysteinyl-[protein] + hexadecanoyl-CoA = S-hexadecanoyl-L-cysteinyl-[protein] + CoA. The ERF2-SHR5 complex is a palmitoyltransferase specific for Ras proteins. Palmitoylates RAS2, which is required for its proper plasma membrane localization. The chain is Palmitoyltransferase ERF2 (ERF2) from Saccharomyces cerevisiae (strain ATCC 204508 / S288c) (Baker's yeast).